A 440-amino-acid polypeptide reads, in one-letter code: Xylose isomerase (440 aa).

Residues His101 and Asp104 contribute to the active site. Residues Glu232, Glu268, His271, Asp296, Asp307, Asp309, and Asp339 each coordinate Mg(2+).

This sequence belongs to the xylose isomerase family. As to quaternary structure, homotetramer. It depends on Mg(2+) as a cofactor.

The protein localises to the cytoplasm. It carries out the reaction alpha-D-xylose = alpha-D-xylulofuranose. The chain is Xylose isomerase from Salmonella agona (strain SL483).